Here is a 1117-residue protein sequence, read N- to C-terminus: Sodium-driven chloride bicarbonate exchanger (1117 aa).

2 disordered regions span residues 1 to 23 (MEIKDQGAQMEPLLPTRNDEEAV) and 58 to 97 (GRKSHRRHRHRGHKHRKRDRERDSGLEDGGESPSFDTPSQ). Residues 1-508 (MEIKDQGAQM…DFRDAFSLQC (508 aa)) are Cytoplasmic-facing. The span at 59 to 76 (RKSHRRHRHRGHKHRKRD) shows a compositional bias: basic residues. Phosphoserine is present on S89. T94 carries the phosphothreonine modification. Residue S275 is modified to Phosphoserine. Disordered stretches follow at residues 282 to 309 (DFSKGLGGQQKGHTSPCGMKQRLDKGPP) and 431 to 476 (WDPS…PELQ). The helical transmembrane segment at 509–529 (LASFLFLYCACMSPVITFGGL) threads the bilayer. The Extracellular portion of the chain corresponds to 530–537 (LGEATEGR). The chain crosses the membrane as a helical span at residues 538-558 (ISAIESLFGASMTGIAYSLFG). The Cytoplasmic segment spans residues 559–561 (GQP). A helical membrane pass occupies residues 562–582 (LTILGSTGPVLVFEKILFKFC). Topologically, residues 583-595 (KEYGLSYLSLRAS) are extracellular. A helical transmembrane segment spans residues 596-616 (IGLWTATLCIILVATDASSLV). At 617-625 (CYITRFTEE) the chain is on the cytoplasmic side. The chain crosses the membrane as a helical span at residues 626 to 646 (AFASLICIIFIYEALEKLFEL). The Extracellular portion of the chain corresponds to 647-719 (SESYPINMHN…VGRACGHGHP (73 aa)). Residues N676, N686, and N696 are each glycosylated (N-linked (GlcNAc...) asparagine). Residues 720-740 (YVPDVLFWSVILFFSTVTMSA) traverse the membrane as a helical segment. Residues 741-761 (TLKQFKTSRYFPTKVRSIVSD) are Cytoplasmic-facing. A helical transmembrane segment spans residues 762–782 (FAVFLTILCMVLIDYAIGIPS). Over 783 to 808 (PKLQVPSVFKPTRDDRGWFVTPLGPN) the chain is Extracellular. The chain crosses the membrane as a helical span at residues 809 to 829 (PWWTIIAAIIPALLCTILIFM). Over 830 to 854 (DQQITAVIINRKEHKLKKGCGYHLD) the chain is Cytoplasmic. Residues 855-875 (LLMVAVMLGVCSIMGLPWFVA) traverse the membrane as a helical segment. Over 876 to 911 (ATVLSITHVNSLKLESECSAPGEQPKFLGIREQRVT) the chain is Extracellular. The chain crosses the membrane as a helical span at residues 912 to 932 (GLMIFILMGSSVFMTSILKFI). At 933–934 (PM) the chain is on the cytoplasmic side. Residues 935 to 955 (PVLYGVFLYMGASSLKGIQLF) form a helical membrane-spanning segment. The Extracellular portion of the chain corresponds to 956-997 (DRIKLFWMPAKHQPDFIYLRHVPLRKVHLFTVIQMSCLGLLW). A helical transmembrane segment spans residues 998-1018 (IIKVSRAAIVFPMMVLALVFV). At 1019–1117 (RKLMDFLFTK…SRFPSKSSPS (99 aa)) the chain is on the cytoplasmic side. Residues S1056 and S1084 each carry the phosphoserine modification.

It belongs to the anion exchanger (TC 2.A.31) family. In terms of processing, N-glycosylated. In the brain, detected in cerebral cortex, subcortex, cerebellum, hippocampus and medulla (at protein level). Expressed in neurons but not in astrocytes (at protein level). Isoforms starting with Met-Glu-Ile-Lys are found predominantly in the brain with lower levels in the eye while isoforms starting with Met-Cys-Asp-Leu are most abundant in the kidney with lower levels in the duodenum, jejunum and ileum (at protein level). In the kidney, isoforms starting with Met-Cys-Asp-Leu are primarily expressed in the cortex, the outer stripe of the outer medulla and the inner stripe of the outer medulla (ISOM) but are not detectable in the inner medulla (IM) while isoforms starting with Met-Glu-Ile-Lys are predominantly expressed in the ISOM and IM. Expressed in the brain, in the hippocampus as well as in dentate gyrus, cortical layers, cerebellum, olfactory bulb and in the epithelial cells of the choroid plexus. Detected in pituitary, testis, kidney and ileum. Detected also in spleen and lung. As to expression, mainly expressed in the jejenum (at protein level).

It localises to the basolateral cell membrane. The protein localises to the apical cell membrane. Its subcellular location is the cell projection. The protein resides in the dendrite. It is found in the axon. It localises to the perikaryon. The protein localises to the presynapse. Its subcellular location is the postsynapse. The catalysed reaction is 2 hydrogencarbonate(out) + chloride(in) + Na(+)(out) = 2 hydrogencarbonate(in) + chloride(out) + Na(+)(in). In terms of biological role, sodium/bicarbonate cotransporter which plays an important role in regulating intracellular pH. Has been shown to act as a sodium/bicarbonate cotransporter in exchange for intracellular chloride. Has also been shown to act as a sodium/biocarbonate cotransporter which does not couple net influx of bicarbonate to net efflux of chloride, with the observed chloride efflux being due to chloride self-exchange. Controls neuronal pH and may contribute to the secretion of cerebrospinal fluid. Acting on presynaptic intracellular pH, it promotes GABA release, reduces the excitability of CA1 pyramidal neurons, and modulates short-term synaptic plasticity. Required in retinal cells to maintain normal pH which is necessary for normal vision. In the kidney, likely to mediate bicarbonate reclamation in the apical membrane of the proximal tubules. Sodium/bicarbonate cotransporter which mediates cotransport of sodium and bicarbonate in association with an efflux of intracellular chloride and is involved in NaCl absorption in the small intestine. The protein is Sodium-driven chloride bicarbonate exchanger of Rattus norvegicus (Rat).